The chain runs to 456 residues: Bifunctional protein GlmU (456 aa).

Residues 1–229 (MLNNAMSVVI…LSEVEGVNNR (229 aa)) form a pyrophosphorylase region. Residues 11–14 (LAAG), K25, Q76, 81–82 (GT), 103–105 (YGD), G140, E154, N169, and N227 each bind UDP-N-acetyl-alpha-D-glucosamine. Mg(2+) is bound at residue D105. N227 lines the Mg(2+) pocket. The interval 230 to 250 (LQLSRLERVYQSEQAEKLLLA) is linker. The N-acetyltransferase stretch occupies residues 251 to 456 (GVMLRDPARF…EGWRRPVKKK (206 aa)). The UDP-N-acetyl-alpha-D-glucosamine site is built by R333 and K351. H363 acts as the Proton acceptor in catalysis. UDP-N-acetyl-alpha-D-glucosamine-binding residues include Y366 and N377. Residues A380, 386–387 (NY), S405, A423, and R440 contribute to the acetyl-CoA site.

It in the N-terminal section; belongs to the N-acetylglucosamine-1-phosphate uridyltransferase family. In the C-terminal section; belongs to the transferase hexapeptide repeat family. Homotrimer. The cofactor is Mg(2+).

Its subcellular location is the cytoplasm. It catalyses the reaction alpha-D-glucosamine 1-phosphate + acetyl-CoA = N-acetyl-alpha-D-glucosamine 1-phosphate + CoA + H(+). It carries out the reaction N-acetyl-alpha-D-glucosamine 1-phosphate + UTP + H(+) = UDP-N-acetyl-alpha-D-glucosamine + diphosphate. Its pathway is nucleotide-sugar biosynthesis; UDP-N-acetyl-alpha-D-glucosamine biosynthesis; N-acetyl-alpha-D-glucosamine 1-phosphate from alpha-D-glucosamine 6-phosphate (route II): step 2/2. It functions in the pathway nucleotide-sugar biosynthesis; UDP-N-acetyl-alpha-D-glucosamine biosynthesis; UDP-N-acetyl-alpha-D-glucosamine from N-acetyl-alpha-D-glucosamine 1-phosphate: step 1/1. It participates in bacterial outer membrane biogenesis; LPS lipid A biosynthesis. Its function is as follows. Catalyzes the last two sequential reactions in the de novo biosynthetic pathway for UDP-N-acetylglucosamine (UDP-GlcNAc). The C-terminal domain catalyzes the transfer of acetyl group from acetyl coenzyme A to glucosamine-1-phosphate (GlcN-1-P) to produce N-acetylglucosamine-1-phosphate (GlcNAc-1-P), which is converted into UDP-GlcNAc by the transfer of uridine 5-monophosphate (from uridine 5-triphosphate), a reaction catalyzed by the N-terminal domain. This is Bifunctional protein GlmU from Escherichia coli O127:H6 (strain E2348/69 / EPEC).